The following is a 349-amino-acid chain: MDMENLTWLHGKPTASGILKANPEDFVVVEDLGFEPDGEGEHLLVRIRKNGCNTQFVADYLARFAKLHPRLVSYAGLKDRHAVTEQWFCLHLPGKEAPDLATFELEGCEVLEAVRHKRKLRIGSLKGNAFTLVLRHITDRQDVEQRLQQIAAQGVPNYFGSQRFGRGGNNLVQARLWANNEIRVKERSKRSFYLSASRSAMFNLISSYRLAQQLSTTVLEGDALQLSGRGSWFVAQADELAALQQRVTAGELNITAPLPGDSELGTHGEALAFEQACLAEQTELLSLIKRERVEGSRRAVLLKPQNMISNWWDDVTLELSFWLPAGSFATSVVREIMNQDRADDTDIIE.

A substrate-binding site is contributed by phenylalanine 26. Aspartate 79 (nucleophile) is an active-site residue. Asparagine 128 lines the substrate pocket. One can recognise a TRUD domain in the interval 154–302 (GVPNYFGSQR…VEGSRRAVLL (149 aa)). Phenylalanine 328 serves as a coordination point for substrate.

The protein belongs to the pseudouridine synthase TruD family.

It carries out the reaction uridine(13) in tRNA = pseudouridine(13) in tRNA. Its function is as follows. Responsible for synthesis of pseudouridine from uracil-13 in transfer RNAs. The polypeptide is tRNA pseudouridine synthase D (Yersinia pestis bv. Antiqua (strain Antiqua)).